Reading from the N-terminus, the 603-residue chain is Arginine--tRNA ligase (603 aa).

A 'HIGH' region motif is present at residues 143–153 (PNIAKEMHVGH).

Belongs to the class-I aminoacyl-tRNA synthetase family. In terms of assembly, monomer.

It localises to the cytoplasm. It carries out the reaction tRNA(Arg) + L-arginine + ATP = L-arginyl-tRNA(Arg) + AMP + diphosphate. The chain is Arginine--tRNA ligase from Prochlorococcus marinus (strain SARG / CCMP1375 / SS120).